A 761-amino-acid polypeptide reads, in one-letter code: Phosphoribosylformylglycinamidine synthase subunit PurL (761 aa).

Low complexity predominate over residues 1–16; sequence MTGNPAAPAATSVSPP. The segment at 1-21 is disordered; sequence MTGNPAAPAATSVSPPAEQPY. H57 is a catalytic residue. The ATP site is built by Y60 and K101. Position 103 (E103) interacts with Mg(2+). Substrate is bound by residues 104–107 and R126; that span reads SHNH. The Proton acceptor role is filled by H105. D127 lines the Mg(2+) pocket. Q252 contributes to the substrate binding site. A Mg(2+)-binding site is contributed by D280. Residue 329–331 participates in substrate binding; sequence ESQ. The ATP site is built by N519 and G556. N557 contributes to the Mg(2+) binding site. S559 provides a ligand contact to substrate.

This sequence belongs to the FGAMS family. As to quaternary structure, monomer. Part of the FGAM synthase complex composed of 1 PurL, 1 PurQ and 2 PurS subunits.

The protein localises to the cytoplasm. The catalysed reaction is N(2)-formyl-N(1)-(5-phospho-beta-D-ribosyl)glycinamide + L-glutamine + ATP + H2O = 2-formamido-N(1)-(5-O-phospho-beta-D-ribosyl)acetamidine + L-glutamate + ADP + phosphate + H(+). The protein operates within purine metabolism; IMP biosynthesis via de novo pathway; 5-amino-1-(5-phospho-D-ribosyl)imidazole from N(2)-formyl-N(1)-(5-phospho-D-ribosyl)glycinamide: step 1/2. In terms of biological role, part of the phosphoribosylformylglycinamidine synthase complex involved in the purines biosynthetic pathway. Catalyzes the ATP-dependent conversion of formylglycinamide ribonucleotide (FGAR) and glutamine to yield formylglycinamidine ribonucleotide (FGAM) and glutamate. The FGAM synthase complex is composed of three subunits. PurQ produces an ammonia molecule by converting glutamine to glutamate. PurL transfers the ammonia molecule to FGAR to form FGAM in an ATP-dependent manner. PurS interacts with PurQ and PurL and is thought to assist in the transfer of the ammonia molecule from PurQ to PurL. The polypeptide is Phosphoribosylformylglycinamidine synthase subunit PurL (Frankia casuarinae (strain DSM 45818 / CECT 9043 / HFP020203 / CcI3)).